Reading from the N-terminus, the 482-residue chain is 2-succinylbenzoate--CoA ligase (482 aa).

This sequence belongs to the ATP-dependent AMP-binding enzyme family. MenE subfamily.

The enzyme catalyses 2-succinylbenzoate + ATP + CoA = 2-succinylbenzoyl-CoA + AMP + diphosphate. Its pathway is quinol/quinone metabolism; 1,4-dihydroxy-2-naphthoate biosynthesis; 1,4-dihydroxy-2-naphthoate from chorismate: step 5/7. It functions in the pathway quinol/quinone metabolism; menaquinone biosynthesis. Functionally, converts 2-succinylbenzoate (OSB) to 2-succinylbenzoyl-CoA (OSB-CoA). This chain is 2-succinylbenzoate--CoA ligase, found in Bacillus cereus (strain AH820).